The following is a 64-amino-acid chain: Large ribosomal subunit protein uL29 (64 aa).

Belongs to the universal ribosomal protein uL29 family.

The polypeptide is Large ribosomal subunit protein uL29 (Nitrosomonas europaea (strain ATCC 19718 / CIP 103999 / KCTC 2705 / NBRC 14298)).